Consider the following 223-residue polypeptide: Phosphoribosylformylglycinamidine synthase subunit PurQ (223 aa).

A Glutamine amidotransferase type-1 domain is found at 3–223 (FAVLVFPGSN…MVKSWREQHV (221 aa)). C85 (nucleophile) is an active-site residue. Catalysis depends on residues H193 and E195.

As to quaternary structure, part of the FGAM synthase complex composed of 1 PurL, 1 PurQ and 2 PurS subunits.

It is found in the cytoplasm. The enzyme catalyses N(2)-formyl-N(1)-(5-phospho-beta-D-ribosyl)glycinamide + L-glutamine + ATP + H2O = 2-formamido-N(1)-(5-O-phospho-beta-D-ribosyl)acetamidine + L-glutamate + ADP + phosphate + H(+). It carries out the reaction L-glutamine + H2O = L-glutamate + NH4(+). It functions in the pathway purine metabolism; IMP biosynthesis via de novo pathway; 5-amino-1-(5-phospho-D-ribosyl)imidazole from N(2)-formyl-N(1)-(5-phospho-D-ribosyl)glycinamide: step 1/2. In terms of biological role, part of the phosphoribosylformylglycinamidine synthase complex involved in the purines biosynthetic pathway. Catalyzes the ATP-dependent conversion of formylglycinamide ribonucleotide (FGAR) and glutamine to yield formylglycinamidine ribonucleotide (FGAM) and glutamate. The FGAM synthase complex is composed of three subunits. PurQ produces an ammonia molecule by converting glutamine to glutamate. PurL transfers the ammonia molecule to FGAR to form FGAM in an ATP-dependent manner. PurS interacts with PurQ and PurL and is thought to assist in the transfer of the ammonia molecule from PurQ to PurL. The protein is Phosphoribosylformylglycinamidine synthase subunit PurQ of Staphylococcus aureus (strain bovine RF122 / ET3-1).